The primary structure comprises 448 residues: Tryptophan dimethylallyltransferase 2 (448 aa).

L-tryptophan-binding positions include 80 to 81 (IL) and Glu89. Positions 100, 186, and 188 each coordinate substrate. The L-tryptophan site is built by Tyr190 and Arg249. Substrate contacts are provided by Arg262, Lys264, Tyr266, Gln348, Tyr350, Tyr414, and Tyr418.

Belongs to the tryptophan dimethylallyltransferase family. As to quaternary structure, homodimer.

It carries out the reaction L-tryptophan + dimethylallyl diphosphate = 4-(3-methylbut-2-enyl)-L-tryptophan + diphosphate. It functions in the pathway alkaloid biosynthesis; ergot alkaloid biosynthesis. Catalyzes the first step of ergot alkaloid biosynthesis. Ergot alkaloids, which are produced by endophyte fungi, can enhance plant host fitness, but also cause livestock toxicosis to host plants. The polypeptide is Tryptophan dimethylallyltransferase 2 (dmaW2) (Claviceps purpurea (strain 20.1) (Ergot fungus)).